Reading from the N-terminus, the 555-residue chain is CTP synthase (555 aa).

Residues 1 to 279 (MATNRAKSST…DNYIIRRLNL (279 aa)) are amidoligase domain. Residue S21 participates in CTP binding. S21 is a binding site for UTP. Residues 22–27 (SLGKGL) and D79 each bind ATP. Residues D79 and E153 each coordinate Mg(2+). CTP-binding positions include 160–162 (DIE), 200–205 (KTKPTQ), and K236. UTP is bound by residues 200 to 205 (KTKPTQ) and K236. The Glutamine amidotransferase type-1 domain maps to 304 to 553 (TIGIVGKYID…VDAALKHQAG (250 aa)). G367 contacts L-glutamine. The active-site Nucleophile; for glutamine hydrolysis is the C394. Residues 395–398 (LGLQ), E417, and R478 contribute to the L-glutamine site. Active-site residues include H526 and E528.

Belongs to the CTP synthase family. Homotetramer.

It catalyses the reaction UTP + L-glutamine + ATP + H2O = CTP + L-glutamate + ADP + phosphate + 2 H(+). The enzyme catalyses L-glutamine + H2O = L-glutamate + NH4(+). It carries out the reaction UTP + NH4(+) + ATP = CTP + ADP + phosphate + 2 H(+). It participates in pyrimidine metabolism; CTP biosynthesis via de novo pathway; CTP from UDP: step 2/2. Its activity is regulated as follows. Allosterically activated by GTP, when glutamine is the substrate; GTP has no effect on the reaction when ammonia is the substrate. The allosteric effector GTP functions by stabilizing the protein conformation that binds the tetrahedral intermediate(s) formed during glutamine hydrolysis. Inhibited by the product CTP, via allosteric rather than competitive inhibition. In terms of biological role, catalyzes the ATP-dependent amination of UTP to CTP with either L-glutamine or ammonia as the source of nitrogen. Regulates intracellular CTP levels through interactions with the four ribonucleotide triphosphates. This chain is CTP synthase, found in Corynebacterium jeikeium (strain K411).